A 459-amino-acid polypeptide reads, in one-letter code: Transcriptional coactivator YAP1-A (459 aa).

Over residues 1-13 (MEPGSQQQPSAPA) the composition is skewed to low complexity. Residues 1 to 22 (MEPGSQQQPSAPAQQPPPVGHQ) are disordered. 4 positions are modified to phosphoserine; by LATS1 and LATS2: Ser-30, Ser-80, Ser-98, and Ser-134. Disordered regions lie at residues 65–99 (FKQP…AHSS) and 126–145 (SAPH…PLPP). 2 WW domains span residues 141 to 174 (VPLP…DPRK) and 199 to 232 (GPLP…DPRL). The tract at residues 246 to 268 (NAPVKAPPALPPPSPQTGVLGSG) is disordered. Positions 250–260 (KAPPALPPPSP) are enriched in pro residues. Positions 261-459 (QTGVLGSGGN…LDKESFLTWL (199 aa)) are transactivation domain. A coiled-coil region spans residues 269–297 (GNQQMRLQQLQMEKERLRLKHQELLRQVR). Residues 344-363 (GTYHSRDESTESGLSMSSYS) are disordered. Polar residues predominate over residues 354–363 (ESGLSMSSYS).

Belongs to the YAP1 family. Interacts with tead1. Phosphorylated by lats1 and lats2; leading to cytoplasmic translocation and inactivation.

The protein resides in the cytoplasm. Its subcellular location is the nucleus. It localises to the cell junction. It is found in the tight junction. The protein localises to the cell membrane. Its function is as follows. Transcriptional regulator which can act both as a coactivator and a corepressor and is the critical downstream regulatory target in the Hippo signaling pathway that plays a pivotal role in organ size control and tumor suppression by restricting proliferation and promoting apoptosis. Plays a key role in tissue tension and 3D tissue shape by regulating cortical actomyosin network formation. Required for expansion of the neural plate and neural plate border zone progenitor pools. Acts as a direct regulator of pax3 expression via interaction with tead1. This chain is Transcriptional coactivator YAP1-A, found in Xenopus laevis (African clawed frog).